Here is a 285-residue protein sequence, read N- to C-terminus: Tryptophan synthase alpha chain (285 aa).

Catalysis depends on proton acceptor residues E53 and D64.

This sequence belongs to the TrpA family. In terms of assembly, tetramer of two alpha and two beta chains.

The catalysed reaction is (1S,2R)-1-C-(indol-3-yl)glycerol 3-phosphate + L-serine = D-glyceraldehyde 3-phosphate + L-tryptophan + H2O. The protein operates within amino-acid biosynthesis; L-tryptophan biosynthesis; L-tryptophan from chorismate: step 5/5. Its function is as follows. The alpha subunit is responsible for the aldol cleavage of indoleglycerol phosphate to indole and glyceraldehyde 3-phosphate. This Bordetella parapertussis (strain 12822 / ATCC BAA-587 / NCTC 13253) protein is Tryptophan synthase alpha chain.